Reading from the N-terminus, the 97-residue chain is Ig heavy chain V region 914 (97 aa).

An Ig-like domain is found at 1–97; the sequence is EVKLVESGGG…EDTAMYYCAR (97 aa).

The protein is Ig heavy chain V region 914 of Mus musculus (Mouse).